The primary structure comprises 77 residues: Neurexophilin-4 (77 aa).

Residues Asn-1–Gly-77 are v (Cys-rich).

The protein belongs to the neurexophilin family. Post-translationally, may be proteolytically processed at the boundary between the N-terminal non-conserved and the central conserved domain in neuron-like cells.

Its subcellular location is the secreted. Functionally, may be signaling molecules that resemble neuropeptides and that act by binding to alpha-neurexins and possibly other receptors. This Macaca mulatta (Rhesus macaque) protein is Neurexophilin-4 (NXPH4).